We begin with the raw amino-acid sequence, 199 residues long: Large ribosomal subunit protein uL18 (199 aa).

This sequence belongs to the universal ribosomal protein uL18 family. In terms of assembly, part of the 50S ribosomal subunit. Contacts the 5S and 23S rRNAs.

Functionally, this is one of the proteins that bind and probably mediate the attachment of the 5S RNA into the large ribosomal subunit, where it forms part of the central protuberance. The protein is Large ribosomal subunit protein uL18 of Saccharolobus solfataricus (strain ATCC 35092 / DSM 1617 / JCM 11322 / P2) (Sulfolobus solfataricus).